The primary structure comprises 57 residues: DELTA-limacoditoxin(2)-Dv11 (57 aa).

The first 24 residues, 1 to 24, serve as a signal peptide directing secretion; sequence MKFAKTFLLLFVVLLLLSIVMAEP.

The protein belongs to the limacoditoxin-2 (cecropin-like) family. In terms of tissue distribution, expressed by the venom secretory cell of the spine. The spine is a cuticular structure containing a single large nucleated venom-secreting cell at its base. It is an independent unit capable of producing, storing and injecting venom. On the back of D.vulnerans caterpillars, spines are grouped together by 50 to 100 to form scoli, of which there are eight in D.vulnerans.

It is found in the secreted. Functionally, peptide that induces pain in mammals and has insecticidal, antibacterial and antiparasitic activities. Induces partially reversible paralysis in D.melanogaster when tested at high doses. Shows a moderate antiparasitic activity against the major pathogenic nematode of ruminants (H.contortus, EC(50)=30.5 uM). Has potent or moderate antibacterial activities against A.baumannii (MIC&lt;0.25 ug/mL) and S.aureus (MIC=16 ug/mL). Has no activity on the other bacteria tested, nor on the fungus C.albicans. Strongly induces the increase of intracellular calcium in mice DRG neurons, which is a proxy for neuronal activation that would occur during nociception. This increase is due to influx of extracellular calcium, suggesting that the peptide forms pore or channel in neuronal cell membranes. In addition, intraplantar injection in mice provokes nocifensive behavior, suggesting a pain-inducing activity. The protein is DELTA-limacoditoxin(2)-Dv11 of Doratifera vulnerans (Mottled cup moth).